Consider the following 424-residue polypeptide: MFALADVNSFYASCEKVFRPDLRDRSVVVLSNNDGCVIPRSAEAKKLGIKMGVPWFQLRSAKFPEPVIAFSSNYALYASMSNRVMVHLEELAPRVEQYSIDEMFLDIRGIDSCIDFEDFGRQLREHVRSGTGLTIGVGMGPTKTLAKSAQWASKEWSQFGGVLALTLHNQKRTEKLLSLQPVEEIWGVGRRISKKLNTMGITTALQLARANPTFIRKNFNVVLERTVRELNGESCISLEEAPPPKQQIVCSRSFGERVTTYEAMRQAVCQHAERAAEKLRGERQFCRHIAVFVKTSPFAVTEPYYGNLASEKLLIPTQDTRDIIAAAVRALDRIWVDGHRYAKAGCMLNDFTPTGVSQLNLFDEVQPRERSEQLMQVLDGINHPGKGKIWFAGRGIAPEWQMKRELLSPAYTTRWADIPAAKLT.

A UmuC domain is found at 2–189 (FALADVNSFY…QPVEEIWGVG (188 aa)).

Belongs to the DNA polymerase type-Y family.

Functionally, involved in UV protection and mutation. This chain is Protein SamB (samB), found in Salmonella typhimurium.